The chain runs to 91 residues: Non-specific lipid-transfer protein 1 (91 aa).

4 disulfides stabilise this stretch: cysteine 4–cysteine 51, cysteine 14–cysteine 28, cysteine 29–cysteine 74, and cysteine 49–cysteine 88.

Expressed in seeds (at protein level).

In terms of biological role, plant non-specific lipid-transfer proteins transfer phospholipids as well as galactolipids across membranes. May play a role in wax or cutin deposition in the cell walls of expanding epidermal cells and certain secretory tissues. Binds to both saturated and unsaturated lipids, with the highest binding efficiency for linoleic acid, followed by linolenic acid. The sequence is that of Non-specific lipid-transfer protein 1 from Foeniculum vulgare (Fennel).